The chain runs to 211 residues: Uracil phosphoribosyltransferase (211 aa).

5-phospho-alpha-D-ribose 1-diphosphate is bound by residues Arg-78, Arg-103, and 130–138 (DPMLATGGT). Uracil is bound by residues Ile-195 and 200–202 (GDA). Residue Asp-201 participates in 5-phospho-alpha-D-ribose 1-diphosphate binding.

The protein belongs to the UPRTase family. Mg(2+) is required as a cofactor.

It carries out the reaction UMP + diphosphate = 5-phospho-alpha-D-ribose 1-diphosphate + uracil. The protein operates within pyrimidine metabolism; UMP biosynthesis via salvage pathway; UMP from uracil: step 1/1. Its activity is regulated as follows. Allosterically activated by GTP. Functionally, catalyzes the conversion of uracil and 5-phospho-alpha-D-ribose 1-diphosphate (PRPP) to UMP and diphosphate. This is Uracil phosphoribosyltransferase from Streptomyces griseus subsp. griseus (strain JCM 4626 / CBS 651.72 / NBRC 13350 / KCC S-0626 / ISP 5235).